The primary structure comprises 546 residues: Beta-amylase (546 aa).

The first 30 residues, 1-30 (MKNQFQYCCIVILSVVMLFVSLLIPQASSA), serve as a signal peptide directing secretion. Substrate is bound at residue Asp79. Residues Glu86, Asp90, and Gln91 each coordinate Ca(2+). Residues His119 and Asp127 each coordinate substrate. Residues Cys121 and Cys129 are joined by a disulfide bond. Glu171 and Glu174 together coordinate Ca(2+). Glu202 functions as the Proton donor in the catalytic mechanism. Residues Lys317, His322, and Thr360 each coordinate substrate. The active-site Proton acceptor is Glu397. Residues 398 to 399 (NA) and Arg427 each bind substrate. One can recognise a CBM20 domain in the interval 444–546 (LLGVTPVMQT…LKTTSHTSSW (103 aa)).

The protein belongs to the glycosyl hydrolase 14 family. As to quaternary structure, monomer. Ca(2+) serves as cofactor.

The catalysed reaction is Hydrolysis of (1-&gt;4)-alpha-D-glucosidic linkages in polysaccharides so as to remove successive maltose units from the non-reducing ends of the chains.. The sequence is that of Beta-amylase (spoII) from Bacillus cereus.